We begin with the raw amino-acid sequence, 123 residues long: UPF0102 protein VFMJ11_2324 (123 aa).

The protein belongs to the UPF0102 family.

The polypeptide is UPF0102 protein VFMJ11_2324 (Aliivibrio fischeri (strain MJ11) (Vibrio fischeri)).